The primary structure comprises 719 residues: Penicillin-binding protein 1A (719 aa).

Positions 62 to 223 are transglycosylase; sequence LIADLGSERR…NQYDPYSHPE (162 aa). Glu91 functions as the Proton donor; for transglycosylase activity in the catalytic mechanism. Positions 297 to 611 are transpeptidase; the sequence is DVYTNVDQEA…RLTPLVGNGL (315 aa). The active-site Acyl-ester intermediate; for transpeptidase activity is the Ser370. The segment at 652-719 is disordered; sequence ARSTWSSPAP…QNQNPQPAQP (68 aa). The span at 654 to 719 shows a compositional bias: low complexity; sequence STWSSPAPQQ…QNQNPQPAQP (66 aa).

In the N-terminal section; belongs to the glycosyltransferase 51 family. This sequence in the C-terminal section; belongs to the transpeptidase family. In terms of assembly, interacts with MreC in the elongasome.

The protein localises to the secreted. It carries out the reaction [GlcNAc-(1-&gt;4)-Mur2Ac(oyl-L-Ala-gamma-D-Glu-L-Lys-D-Ala-D-Ala)](n)-di-trans,octa-cis-undecaprenyl diphosphate + beta-D-GlcNAc-(1-&gt;4)-Mur2Ac(oyl-L-Ala-gamma-D-Glu-L-Lys-D-Ala-D-Ala)-di-trans,octa-cis-undecaprenyl diphosphate = [GlcNAc-(1-&gt;4)-Mur2Ac(oyl-L-Ala-gamma-D-Glu-L-Lys-D-Ala-D-Ala)](n+1)-di-trans,octa-cis-undecaprenyl diphosphate + di-trans,octa-cis-undecaprenyl diphosphate + H(+). It catalyses the reaction Preferential cleavage: (Ac)2-L-Lys-D-Ala-|-D-Ala. Also transpeptidation of peptidyl-alanyl moieties that are N-acyl substituents of D-alanine.. It participates in cell wall biogenesis; peptidoglycan biosynthesis. Functionally, cell wall formation. This is Penicillin-binding protein 1A (pbpA) from Streptococcus pneumoniae (strain ATCC BAA-255 / R6).